Reading from the N-terminus, the 291-residue chain is Protein-export membrane protein SecF (291 aa).

A run of 6 helical transmembrane segments spans residues 19 to 39 (LVVI…SWYV), 134 to 154 (LALG…FLMF), 156 to 176 (VFVP…ISVA), 187 to 209 (LGTV…LLNN), 226 to 246 (MRTG…MAAV), and 256 to 278 (AAIG…LLNL).

It belongs to the SecD/SecF family. SecF subfamily. In terms of assembly, part of the protein translocation apparatus. Forms a complex with SecD.

The protein localises to the cell membrane. Its function is as follows. Involved in protein export. In Haloquadratum walsbyi (strain DSM 16790 / HBSQ001), this protein is Protein-export membrane protein SecF.